We begin with the raw amino-acid sequence, 239 residues long: Lytic polysaccharide monooxygenase-like protein X325 (239 aa).

An N-terminal signal peptide occupies residues 1–24 (MVLPSSVSQWAALIALLCAGLANA). His-25 provides a ligand contact to Cu(2+). N-linked (GlcNAc...) asparagine glycans are attached at residues Asn-41, Asn-56, Asn-79, Asn-117, Asn-150, and Asn-197. Cystine bridges form between Cys-71-Cys-176 and Cys-141-Cys-195. Residue Ser-214 is the site of GPI-anchor amidated serine attachment. Residues 215-239 (AAAPKSSLMSVLPVYMVALLSWAMM) constitute a propeptide, removed in mature form.

Belongs to the X325 family. Requires Cu(2+) as cofactor.

Its subcellular location is the cell membrane. In terms of biological role, lytic polysaccharide monooxygenase-like protein that has diverged to biological functions other than polysaccharide degradation since it does not perform oxidative cleavage of polysaccharides. Acts as a cell surface-bound protein that functions in the copper-accumulation pathway. May also act as the major cell wall sensor that regulates MAP kinase-dependent hyphal anastomosis, the fusion of hyphal cells. This is Lytic polysaccharide monooxygenase-like protein X325 from Aspergillus fumigatus (strain ATCC MYA-4609 / CBS 101355 / FGSC A1100 / Af293) (Neosartorya fumigata).